Consider the following 91-residue polypeptide: MAIFKSISSISNSTGSMGSSISASNLDGIDSNNNSIACFDGGCGGSGLGGWSGFNGLDGIGGFNGGCSGGSNTNIINLDIDIGRRRHRRCC.

It belongs to the UPF0512 family.

This chain is UPF0512 protein F, found in Dictyostelium discoideum (Social amoeba).